Here is a 410-residue protein sequence, read N- to C-terminus: Cysteine desulfurase IscS (410 aa).

Residues 80-81 (AT), N160, Q188, and 208-210 (SGH) each bind pyridoxal 5'-phosphate. K211 bears the N6-(pyridoxal phosphate)lysine mark. T248 contacts pyridoxal 5'-phosphate. C334 acts as the Cysteine persulfide intermediate in catalysis. C334 contacts [2Fe-2S] cluster.

The protein belongs to the class-V pyridoxal-phosphate-dependent aminotransferase family. NifS/IscS subfamily. Homodimer. Forms a heterotetramer with IscU, interacts with other sulfur acceptors. The cofactor is pyridoxal 5'-phosphate.

The protein resides in the cytoplasm. The catalysed reaction is (sulfur carrier)-H + L-cysteine = (sulfur carrier)-SH + L-alanine. It functions in the pathway cofactor biosynthesis; iron-sulfur cluster biosynthesis. Its function is as follows. Master enzyme that delivers sulfur to a number of partners involved in Fe-S cluster assembly, tRNA modification or cofactor biosynthesis. Catalyzes the removal of elemental sulfur atoms from cysteine to produce alanine. Functions as a sulfur delivery protein for Fe-S cluster synthesis onto IscU, an Fe-S scaffold assembly protein, as well as other S acceptor proteins. This is Cysteine desulfurase IscS from Rickettsia bellii (strain OSU 85-389).